The sequence spans 86 residues: Polcalcin Che a 3 (86 aa).

2 EF-hand domains span residues 8–43 (QDIADRERIFKRFDTNGDGKISSSELGDALKTLGSV) and 43–78 (VTPDEVRRMMAEIDTDGDGFISFDEFTDFARANRGL). The Ca(2+) site is built by D21, N23, D25, K27, E32, D56, D58, D60, and E67.

This is Polcalcin Che a 3 from Chenopodium album (Fat hen).